The sequence spans 342 residues: AA9 family lytic polysaccharide monooxygenase AA9-X282 (342 aa).

An N-terminal signal peptide occupies residues 1–18 (MKSFASLLFLAATAAAHA). Cu(2+) is bound at residue His17. A phosphothreonine mark is found at Thr19 and Thr57. Ser59 carries the phosphoserine modification. Cys63 and Cys181 are joined by a disulfide. His93 is a Cu(2+) binding site. Residues His167 and Gln176 each contribute to the O2 site. Tyr178 lines the Cu(2+) pocket. Asn189 is a glycosylation site (N-linked (GlcNAc...) asparagine). An X282 extension region spans residues 233–263 (SPATVANTPYPTTATWNTALQPTTVPTVTPP). Residues 281-302 (VTSQPPVPPTTQQPPVVTPTAP) are disordered. Residues 285 to 302 (PPVPPTTQQPPVVTPTAP) show a composition bias toward pro residues. The 37-residue stretch at 306-342 (PLQTQYGQCGGQGWNGPTQCQPPYTCTASNQWYHQCL) folds into the CBM1 domain.

Belongs to the polysaccharide monooxygenase AA9 family. Requires Cu(2+) as cofactor.

It localises to the secreted. It catalyses the reaction [(1-&gt;4)-beta-D-glucosyl]n+m + reduced acceptor + O2 = 4-dehydro-beta-D-glucosyl-[(1-&gt;4)-beta-D-glucosyl]n-1 + [(1-&gt;4)-beta-D-glucosyl]m + acceptor + H2O.. In terms of biological role, lytic polysaccharide monooxygenase (LPMO) that depolymerizes crystalline and amorphous polysaccharides via the oxidation of scissile alpha- or beta-(1-4)-glycosidic bonds, yielding C1 oxidation products. Catalysis by LPMOs requires the reduction of the active-site copper from Cu(II) to Cu(I) by a reducing agent and H(2)O(2) or O(2) as a cosubstrate. Shows only weak binding properties to cellulose, and low cellulolytic oxidative activity which questions the involvement of X282 extension-containing AA9 proteins in the degradation of plant cell wall and opens new avenues as to the divergence of function of some AA9 members. The sequence is that of AA9 family lytic polysaccharide monooxygenase AA9-X282 from Coprinopsis cinerea (strain Okayama-7 / 130 / ATCC MYA-4618 / FGSC 9003) (Inky cap fungus).